Here is a 397-residue protein sequence, read N- to C-terminus: Elongation factor Tu (397 aa).

Residues 10-206 (KPHVNIGTIG…AVDTSIPQPE (197 aa)) enclose the tr-type G domain. The segment at 19–26 (GHIDHGKT) is G1. 19 to 26 (GHIDHGKT) provides a ligand contact to GTP. Thr26 lines the Mg(2+) pocket. The interval 62–66 (GITIS) is G2. A G3 region spans residues 83 to 86 (DCPG). GTP-binding positions include 83–87 (DCPGH) and 138–141 (NKSD). The interval 138–141 (NKSD) is G4. The interval 176-178 (SAL) is G5.

Belongs to the TRAFAC class translation factor GTPase superfamily. Classic translation factor GTPase family. EF-Tu/EF-1A subfamily. Monomer.

Its subcellular location is the cytoplasm. It carries out the reaction GTP + H2O = GDP + phosphate + H(+). In terms of biological role, GTP hydrolase that promotes the GTP-dependent binding of aminoacyl-tRNA to the A-site of ribosomes during protein biosynthesis. In Salinispora tropica (strain ATCC BAA-916 / DSM 44818 / JCM 13857 / NBRC 105044 / CNB-440), this protein is Elongation factor Tu.